A 465-amino-acid chain; its full sequence is Alpha-2A adrenergic receptor (465 aa).

At 1 to 48 (MFRQEQPLAEGSFAPMGSLQPDAGNSSWNGTEAPGGGTRATPYSLQVT) the chain is on the extracellular side. 2 N-linked (GlcNAc...) asparagine glycosylation sites follow: Asn-25 and Asn-29. Residues 49 to 74 (LTLVCLAGLLMLFTVFGNVLVIIAVF) traverse the membrane as a helical segment. Residues 75 to 85 (TSRALKAPQNL) lie on the Cytoplasmic side of the membrane. Residues 86-111 (FLVSLASADILVATLVIPFSLANEVM) traverse the membrane as a helical segment. Over 112–121 (GYWYFGKVWC) the chain is Extracellular. A disulfide bridge connects residues Cys-121 and Cys-203. Residues 122–144 (EIYLALDVLFCTSSIVHLCAISL) form a helical membrane-spanning segment. Residues 145–164 (DRYWSITQAIEYNLKRTPRR) lie on the Cytoplasmic side of the membrane. The helical transmembrane segment at 165 to 188 (IKAIIVTVWVISAVISFPPLISIE) threads the bilayer. Residues 189–207 (KKGAGGGQQPAEPSCKIND) are Extracellular-facing. Residues 208–232 (QKWYVISSSIGSFFAPCLIMILVYV) traverse the membrane as a helical segment. Over 233–389 (RIYQIAKRRT…RQNREKRFTF (157 aa)) the chain is Cytoplasmic. The disordered stretch occupies residues 242 to 378 (TRVPPSRRGP…GGGAKASRWR (137 aa)). Residues 313–330 (SSEHAERPPGPRRPDRGP) are compositionally biased toward basic and acidic residues. Ser-346 is subject to Phosphoserine. Positions 353–363 (GAAGPGASGSG) are enriched in gly residues. Residue Arg-368 is modified to Omega-N-methylarginine. A helical membrane pass occupies residues 390–414 (VLAVVIGVFVVCWFPFFFTYTLIAV). Residues 415-424 (GCPVPSQLFN) are Extracellular-facing. Residues 425–445 (FFFWFGYCNSSLNPVIYTIFN) traverse the membrane as a helical segment. Residues 446–465 (HDFRRAFKKILCRGDRKRIV) are Cytoplasmic-facing. Cys-457 is lipidated: S-palmitoyl cysteine.

Belongs to the G-protein coupled receptor 1 family. Adrenergic receptor subfamily. ADRA2A sub-subfamily.

The protein resides in the cell membrane. Its function is as follows. Alpha-2 adrenergic receptors mediate the catecholamine-induced inhibition of adenylate cyclase through the action of G proteins. The sequence is that of Alpha-2A adrenergic receptor from Mus musculus (Mouse).